The following is a 406-amino-acid chain: 5-hydroxytryptamine receptor 4 (406 aa).

Residues 1–19 (MDRLDANVSSNEGFGSVEK) lie on the Extracellular side of the membrane. Asn7 is a glycosylation site (N-linked (GlcNAc...) asparagine). The chain crosses the membrane as a helical span at residues 20–44 (VVLLTFFAMVILMAILGNLLVMVAV). The Cytoplasmic segment spans residues 45-54 (CRDRQLRKIK). The helical transmembrane segment at 55–78 (TNYFIVSLAFADLLVSVLVNAFGA) threads the bilayer. The Extracellular portion of the chain corresponds to 79 to 92 (IELVQDIWFYGEMF). The chain crosses the membrane as a helical span at residues 93–117 (CLVRTSLDVLLTTASIFHLCCISLD). An intrachain disulfide couples Cys93 to Cys184. A serotonin-binding site is contributed by Asp100. The Cytoplasmic portion of the chain corresponds to 118-133 (RYYAICCQPLVYRNKM). Residues 134-157 (TPLRIALMLGGCWVIPMFISFLPI) form a helical membrane-spanning segment. The Extracellular segment spans residues 158–188 (MQGWNNIGIVDVIEKRKFNHNSNSTFCVFMV). A helical membrane pass occupies residues 189–212 (NKPYAITCSVVAFYIPFLLMVLAY). Topologically, residues 213-257 (YRIYVTAKEHAQQIQMLQRAGATSESRPQTADQHSTHRMRTETKA) are cytoplasmic. A helical transmembrane segment spans residues 258-283 (AKTLCVIMGCFCFCWAPFFVTNIVDP). Asn279 lines the serotonin pocket. Over 284–290 (FIDYTVP) the chain is Extracellular. A helical transmembrane segment spans residues 291-314 (EKVWTAFLWLGYINSGLNPFLYAF). At 315–406 (LNKSFRRAFL…DSCSLKRSQS (92 aa)) the chain is on the cytoplasmic side.

It belongs to the G-protein coupled receptor 1 family. In terms of assembly, interacts (via C-terminus 330-346 AA) with GRK5; this interaction is promoted by 5-HT (serotonin). In terms of tissue distribution, in brain, isoform 5-HT4S is restricted to the striatum. In peripheral tissues, differential expression is also observed in the atrium of the heart where only isoform 5-HT4S is detectable. As to expression, in brain, isoform 5-HT4L is expressed throughout the brain, except in the cerebellum.

It is found in the cell membrane. Its subcellular location is the endosome membrane. In terms of biological role, G-protein coupled receptor for 5-hydroxytryptamine (serotonin), a biogenic hormone that functions as a neurotransmitter, a hormone and a mitogen. Ligand binding causes a conformation change that triggers signaling via guanine nucleotide-binding proteins (G proteins) and modulates the activity of downstream effectors. HTR4 is coupled to G(s) G alpha proteins and mediates activation of adenylate cyclase activity. The chain is 5-hydroxytryptamine receptor 4 (Htr4) from Rattus norvegicus (Rat).